A 419-amino-acid chain; its full sequence is Histidine--tRNA ligase (419 aa).

This sequence belongs to the class-II aminoacyl-tRNA synthetase family. In terms of assembly, homodimer.

The protein localises to the cytoplasm. It carries out the reaction tRNA(His) + L-histidine + ATP = L-histidyl-tRNA(His) + AMP + diphosphate + H(+). This Trichlorobacter lovleyi (strain ATCC BAA-1151 / DSM 17278 / SZ) (Geobacter lovleyi) protein is Histidine--tRNA ligase.